The following is a 189-amino-acid chain: MNIKTIKIVTIGDYGVGKTTLLMTYTASGSFPQEYVPTALDNFIHEATINGKKASLSIWDTAGGEYYHELRPLIYPETDILLLLFAIENRESFLHIKTNWITEINQYIPGIPIILVGTKIDLRDSDLIKDKSNFVKYKEGLALSKEIGASHFCECSSRMNLGLEELFKKVIKLTNNNNNNNNNNKCIIL.

12–19 (GDYGVGKT) serves as a coordination point for GTP. The short motif at 35 to 43 (YVPTALDNF) is the Effector region element. Residues 60–64 (DTAGG) and 118–121 (TKID) contribute to the GTP site. Position 186 is a cysteine methyl ester (C186). A lipid anchor (S-geranylgeranyl cysteine) is attached at C186. Residues 187-189 (IIL) constitute a propeptide, removed in mature form.

Belongs to the small GTPase superfamily. Rho family.

Its subcellular location is the cell membrane. The chain is Rho-related protein racM (racM) from Dictyostelium discoideum (Social amoeba).